We begin with the raw amino-acid sequence, 326 residues long: Flap endonuclease 1 (326 aa).

The interval 1-98 (MGVQFNDSIP…KTREERRKVK (98 aa)) is N-domain. Mg(2+) contacts are provided by Asp27, Asp80, Glu152, Glu154, Asp173, Asp175, and Asp224. Residues 116 to 245 (DMQKYAKRIN…KKALTIIKNK (130 aa)) are I-domain. The interaction with PCNA stretch occupies residues 318-326 (SQTSLDSWF).

The protein belongs to the XPG/RAD2 endonuclease family. FEN1 subfamily. As to quaternary structure, interacts with PCNA. PCNA stimulates the nuclease activity without altering cleavage specificity. Requires Mg(2+) as cofactor.

In terms of biological role, structure-specific nuclease with 5'-flap endonuclease and 5'-3' exonuclease activities involved in DNA replication and repair. During DNA replication, cleaves the 5'-overhanging flap structure that is generated by displacement synthesis when DNA polymerase encounters the 5'-end of a downstream Okazaki fragment. Binds the unpaired 3'-DNA end and kinks the DNA to facilitate 5' cleavage specificity. Cleaves one nucleotide into the double-stranded DNA from the junction in flap DNA, leaving a nick for ligation. Also involved in the base excision repair (BER) pathway. Acts as a genome stabilization factor that prevents flaps from equilibrating into structures that lead to duplications and deletions. Also possesses 5'-3' exonuclease activity on nicked or gapped double-stranded DNA. The polypeptide is Flap endonuclease 1 (Methanococcus aeolicus (strain ATCC BAA-1280 / DSM 17508 / OCM 812 / Nankai-3)).